Here is a 260-residue protein sequence, read N- to C-terminus: Methylphosphonate hydroxylase (260 aa).

K107 serves as a coordination point for 2-oxoglutarate. Fe cation is bound by residues H117, D119, and H195.

The protein belongs to the PhyH family. Fe(2+) is required as a cofactor.

It carries out the reaction methylphosphonate + 2-oxoglutarate + O2 = hydroxymethylphosphonate + succinate + CO2. In terms of biological role, part of an oxidative pathway for utilization of methylphosphonic acid as a phosphate source. Catalyzes the conversion of methylphosphonic acid to hydroxymethylphosphonic acid. Is specific for the hydroxylation of methylphosphonate. This is Methylphosphonate hydroxylase from Gimesia maris (strain ATCC 29201 / DSM 8797 / 534-30) (Planctomyces maris).